The chain runs to 171 residues: Photosystem I assembly protein Ycf3 (171 aa).

TPR repeat units follow at residues 35–68, 72–105, and 120–153; these read AFTY…EIDP, SYIL…NPSL, and GEQA…APSN.

Belongs to the Ycf3 family.

It localises to the plastid. The protein resides in the chloroplast thylakoid membrane. Essential for the assembly of the photosystem I (PSI) complex. May act as a chaperone-like factor to guide the assembly of the PSI subunits. In Angiopteris evecta (Mule's foot fern), this protein is Photosystem I assembly protein Ycf3.